The following is a 180-amino-acid chain: Putative adenylate kinase (180 aa).

ATP is bound by residues Gly-10, Gly-12, Lys-13, Thr-14, and Thr-15. Positions 30-50 are NMP; sequence NLRDFALEKGCGREVDGEVEV. The LID stretch occupies residues 99 to 109; it reads ERGYSKEKIGE. Residues Arg-100 and Lys-138 each contribute to the ATP site.

It belongs to the adenylate kinase family. AK6 subfamily. In terms of assembly, interacts with uS11. Not a structural component of 40S pre-ribosomes, but transiently interacts with them by binding to uS11.

The catalysed reaction is AMP + ATP = 2 ADP. It carries out the reaction ATP + H2O = ADP + phosphate + H(+). Functionally, broad-specificity nucleoside monophosphate (NMP) kinase that catalyzes the reversible transfer of the terminal phosphate group between nucleoside triphosphates and monophosphates. Also has ATPase activity. Involved in the late maturation steps of the 30S ribosomal particles, specifically 16S rRNA maturation. While NMP activity is not required for ribosome maturation, ATPase activity is. Associates transiently with small ribosomal subunit protein uS11. ATP hydrolysis breaks the interaction with uS11. May temporarily remove uS11 from the ribosome to enable a conformational change of the ribosomal RNA that is needed for the final maturation step of the small ribosomal subunit. This chain is Putative adenylate kinase, found in Pyrococcus abyssi (strain GE5 / Orsay).